The following is a 225-amino-acid chain: Protein ZW2 (225 aa).

Positions 7-225 (SETFASFFND…FYLRLRDLGV (219 aa)) constitute a DOG1 domain.

May be involved in the regulation of abscisic acid (ABA) sensitivity. This Arabidopsis thaliana (Mouse-ear cress) protein is Protein ZW2.